The sequence spans 2344 residues: Mucin-4 (2344 aa).

The signal sequence occupies residues 1–30 (MRGPHGVSWRVPWLCLSCLCSCLLLLPVNT). Positions 32 to 46 (TTSAPKTSTALPSST) are enriched in low complexity. Disordered regions lie at residues 32–760 (TTSA…QGSI), 773–1036 (QKMS…TTST), 1072–1130 (VPSL…TPSV), 1171–1197 (STVAHRQSTQRSSTHSQSYLTESMGAS), and 1233–1269 (SGLTTKTDNDRSTALSATSLTLPAPSTSTASRSTVPP). Over residues 47–100 (NPSQMTSQVSNPTASSYRMTKNTGQASPMVTSSSITTLPQSQHTGSMKTTRNPQ) the composition is skewed to polar residues. The tract at residues 81–1006 (ITTLPQSQHT…VSTLVTSTQE (926 aa)) is variable number of tandem repeats (VNTR). Composition is skewed to low complexity over residues 101-116 (TTGTTEVTTTLSASSS) and 123-137 (TTSQTTLSPDTTTTS). A glycan (O-linked (GalNAc...) threonine) is linked at threonine 133. Residues 142-225 (ESSSPPSTSV…GGMKTTRNPQ (84 aa)) show a composition bias toward polar residues. Residues 226–273 (TTGTTEVTTTLSASSSDHPTSSPESTPGNTAPRTTETSTTTTTKVLMT) are compositionally biased toward low complexity. Over residues 274–305 (SLQQKLPTGSTLGTSTQELTTLPQSQHTGIMK) the composition is skewed to polar residues. Low complexity-rich tracts occupy residues 306–322 (TTSRTQTTTPTEVTTRT) and 335–349 (TSSQTTLSPDTTTTS). A compositionally biased stretch (polar residues) spans 373-436 (SGDTGHTMAV…GMKTTRNPQR (64 aa)). 2 O-linked (GalNAc...) threonine glycosylation sites follow: threonine 391 and threonine 392. The span at 437–446 (TTPTEVTTST) shows a compositional bias: low complexity. The span at 447–468 (LSASSSDQVQVETTSRATLSPD) shows a compositional bias: polar residues. Residues 469–492 (TTTTSHAPSVSSSSPSPPSTEGTS) are compositionally biased toward low complexity. Threonine 470 is a glycosylation site (O-linked (GalNAc...) threonine). Serine 479 carries an O-linked (GalNAc...) serine glycan. Polar residues predominate over residues 493-509 (VDTGLTTAVTTQDSTPA). A compositionally biased stretch (low complexity) spans 510-546 (TTQGSLTSSSQTLSTVSPLSTSTQETSTQELTSSQSQ). Residues 547-580 (HTGSMKTTHNPQTTRNTEVTTTLSASSSDQVQVE) are compositionally biased toward polar residues. Low complexity predominate over residues 581–594 (TTSQTTLSDATTTS). The segment covering 599–682 (ESSSPPSTSD…GGMKTTRNPQ (84 aa)) has biased composition (polar residues). Composition is skewed to low complexity over residues 683–698 (TTGTTEVTTTLSASSS) and 705–719 (TSSQTTLSPDTTTTS). 2 stretches are compositionally biased toward polar residues: residues 724-760 (ESSSPPSTSDMLTTTASTEGTSGDTGHTTAVTTQGSI) and 773-807 (QKMSTVSTPTTSSIQELSTLPQSQHTGSMEISSRP). The segment covering 808-828 (QTTSVTSTLSSSPSGSTPVQT) has biased composition (low complexity). A compositionally biased stretch (polar residues) spans 829–868 (RSVTSSSDERTNPTSSGVSNTSPATTEVLTPTSSPESTPG). The segment covering 869 to 915 (NTAPRTTETSTTTTTKVLMTSLQQKLPTGSTLGTSTPTEVTTTLSAS) has biased composition (low complexity). Residues 916 to 994 (SSDQVQVETT…ISVTPSTQKM (79 aa)) are compositionally biased toward polar residues. Residues 995-1015 (STVSTLVTSTQELTSSQSQRT) show a composition bias toward low complexity. Residues 1016-1026 (GSMGTSSKPQA) show a composition bias toward polar residues. A compositionally biased stretch (low complexity) spans 1027-1036 (TTPTEVTTST). A compositionally biased stretch (polar residues) spans 1072-1083 (VPSLMHSSKPQA). Positions 1084 to 1096 (TTPTEVTTSTLSS) are enriched in low complexity. Over residues 1097-1116 (FSRGSTQTQTVSWETSSSGK) the composition is skewed to polar residues. Low complexity-rich tracts occupy residues 1118–1130 (TAPSTSSRRTPSV), 1175–1188 (HRQSTQRSSTHSQS), and 1233–1267 (SGLTTKTDNDRSTALSATSLTLPAPSTSTASRSTV). The region spanning 1332–1492 (GHSGVMLISL…TGYTGRCGPT (161 aa)) is the NIDO domain. Residues 1574–1597 (GRHRTGLAAGTTSPLSASSTSSGG) are disordered. The span at 1580-1597 (LAAGTTSPLSASSTSSGG) shows a compositional bias: low complexity. Residues 1609-1804 (RPAWTFGDPH…HYGMTSETNG (196 aa)) form the VWFD domain. N-linked (GlcNAc...) asparagine glycosylation is found at asparagine 1644, asparagine 1660, asparagine 1672, asparagine 1689, asparagine 1698, asparagine 1704, asparagine 1715, asparagine 1724, asparagine 1759, asparagine 1780, asparagine 1787, asparagine 1829, asparagine 1874, asparagine 1926, asparagine 1951, asparagine 1974, asparagine 1981, asparagine 2029, and asparagine 2048. The EGF-like 1 domain occupies 2047–2086 (QNHSCPVNYCYNHGHCDISGPPDCQPTCTCAPAFTGNRCF). Cystine bridges form between cysteine 2051–cysteine 2062, cysteine 2056–cysteine 2074, and cysteine 2076–cysteine 2085. Asparagine 2114 and asparagine 2121 each carry an N-linked (GlcNAc...) asparagine glycan. Residues 2173–2193 (GPLIHYLNNQLISAVMEAFLL) form a helical membrane-spanning segment. An N-linked (GlcNAc...) asparagine glycan is attached at asparagine 2227. The EGF-like 2 domain occupies 2256-2295 (VSPCSEGYCHNGGQCKHLPDGPQCTCATFSIYTSWGERCE). 3 cysteine pairs are disulfide-bonded: cysteine 2259-cysteine 2270, cysteine 2264-cysteine 2279, and cysteine 2281-cysteine 2294. A helical membrane pass occupies residues 2301-2321 (LGAFFGILFGALGALLLLAIL).

As to quaternary structure, a heterodimeric complex, composed of a mucin-4 alpha chain and a cysteine-rich transmembrane mucin-4 beta chain. Mucin-4 beta chain interacts with ERBB2 via the EGF-like domain 1. In nonpolarized cells, associates with ERBB2 and ERBB3. Post-translationally, proteolytically cleaved into 2 subunits, mucin-4 alpha chain and mucin-4 beta chain. Mucin-4 alpha subunit is highly O-glycosylated. In terms of processing, mucin-4 beta subunit is predominantly N-glycosylated. As to expression, expression is developmentally regulated in the mammary gland, dramatically increases in the lactating gland compared with the virgin mammary gland, while decreasing again during mammary gland involution. Expressed in 13762 ascites cells. Overexpressed in some aggressive mammary tumors. Overexpression seems to block cell-cell and cell-matrix interactions to protect tumor cells from immune surveillance, and to promote metastasis.

It localises to the cell membrane. The protein localises to the secreted. Its function is as follows. Membrane-bound mucin, a family of highly glycosylated proteins that constitute the major component of the mucus, the slimy and viscous secretion covering epithelial surfaces. These glycoproteins play important roles in the protection of the epithelium and are implicated in epithelial renewal and differentiation. Regulates cellular behavior through both anti-adhesive effects on cell-cell and cell-extracellular matrix interactions and its ability to act as an intramembrane ligand for ERBB2. Plays an important role in proliferation and differentiation of epithelial cells by inducing specific phosphorylation of ERBB2. In polarized epithelial cells, segregates ERBB2 and other ERBB receptors and prevents ERBB2 from acting as a coreceptor. The interaction with ERBB2 leads to enhanced expression of CDKN1B. The formation of a MUC4-ERBB2-ERBB3-NRG1 complex leads to down-regulation of CDKN1B, resulting in repression of apoptosis and stimulation of proliferation. Its ability to promote tumor growth may be mainly due to repression of apoptosis as opposed to proliferation. The protein is Mucin-4 (Muc4) of Rattus norvegicus (Rat).